We begin with the raw amino-acid sequence, 144 residues long: 3-hydroxyacyl-[acyl-carrier-protein] dehydratase FabZ (144 aa).

H48 is a catalytic residue.

It belongs to the thioester dehydratase family. FabZ subfamily.

The protein resides in the cytoplasm. It catalyses the reaction a (3R)-hydroxyacyl-[ACP] = a (2E)-enoyl-[ACP] + H2O. Its function is as follows. Involved in unsaturated fatty acids biosynthesis. Catalyzes the dehydration of short chain beta-hydroxyacyl-ACPs and long chain saturated and unsaturated beta-hydroxyacyl-ACPs. This chain is 3-hydroxyacyl-[acyl-carrier-protein] dehydratase FabZ, found in Chloroflexus aggregans (strain MD-66 / DSM 9485).